A 176-amino-acid chain; its full sequence is ADP-ribosylation factor-like protein 8d (176 aa).

GTP-binding positions include 21-26 (NSGKTS), 40-43 (MIPT), 62-66 (DLGGQ), and 121-124 (NKID).

Belongs to the small GTPase superfamily. Arf family. In terms of assembly, interacts with tubulin.

It localises to the late endosome membrane. The protein resides in the lysosome membrane. The protein localises to the cytoplasm. It is found in the cytoskeleton. Its subcellular location is the spindle. Functionally, may play a role in lysosome motility. May play a role in chromosome segregation. In Arabidopsis thaliana (Mouse-ear cress), this protein is ADP-ribosylation factor-like protein 8d.